The following is a 445-amino-acid chain: E3 ubiquitin-protein ligase MYLIP (445 aa).

One can recognise an FERM domain in the interval Met1–Thr279. The segment at Arg341–Cys363 is disordered. Residues Pro350–Cys363 show a composition bias toward low complexity. Fe cation-binding residues include Cys360, Cys363, and Cys368. Residues Cys387–Arg422 form an RING-type zinc finger. The critical for homodimerization stretch occupies residues Val431–Leu433.

As to quaternary structure, homodimer. Interacts with the E2 ubiquitin-conjugating enzyme, UBE2D1 (via RING-type zinc finger). Interacts with myosin regulatory light chain (MRLC) and TMEM4. Post-translationally, autoubiquitinated. As to expression, expressed in developing and adult brain, hippocampus, cerebellum, cerebral cortex, thalamus and substantia nigra. Predominantly found in neurons.

The protein localises to the cytoplasm. The protein resides in the cell membrane. The catalysed reaction is S-ubiquitinyl-[E2 ubiquitin-conjugating enzyme]-L-cysteine + [acceptor protein]-L-lysine = [E2 ubiquitin-conjugating enzyme]-L-cysteine + N(6)-ubiquitinyl-[acceptor protein]-L-lysine.. Its pathway is protein modification; protein ubiquitination. With respect to regulation, can bind 1 iron ion per dimer. Iron binding seems to decrease LDLR degradation activity. In terms of biological role, E3 ubiquitin-protein ligase that mediates ubiquitination and subsequent proteasomal degradation of myosin regulatory light chain (MRLC), LDLR, VLDLR and LRP8. Activity depends on E2 enzymes of the UBE2D family. Proteasomal degradation of MRLC leads to inhibit neurite outgrowth in presence of NGF by counteracting the stabilization of MRLC by saposin-like protein (CNPY2/MSAP) and reducing CNPY2-stimulated neurite outgrowth. Acts as a sterol-dependent inhibitor of cellular cholesterol uptake by mediating ubiquitination and subsequent degradation of LDLR. The polypeptide is E3 ubiquitin-protein ligase MYLIP (Mylip) (Rattus norvegicus (Rat)).